The chain runs to 236 residues: MKDFLPAFWAVIPAAGIGARMAADRPKQYLQLGGLTILEHSLLCFLDHPRLKGLVISLAVDDPYWAALPCAKDARIQRVDGGSERSGSVLNALLHLHAQGASDNDWVLVHDAARPNLARSDLDNLLGELADDPVGGLLAVPARDTLKRADSSGRVLETVDRSLIWQAFTPQMFRLGALHRALADSLVSNVSITDEASAIEWAGQSPRLVEGRSDNIKVTRPEDLEWLRQRRTEFGR.

This sequence belongs to the IspD/TarI cytidylyltransferase family. IspD subfamily.

It catalyses the reaction 2-C-methyl-D-erythritol 4-phosphate + CTP + H(+) = 4-CDP-2-C-methyl-D-erythritol + diphosphate. Its pathway is isoprenoid biosynthesis; isopentenyl diphosphate biosynthesis via DXP pathway; isopentenyl diphosphate from 1-deoxy-D-xylulose 5-phosphate: step 2/6. Functionally, catalyzes the formation of 4-diphosphocytidyl-2-C-methyl-D-erythritol from CTP and 2-C-methyl-D-erythritol 4-phosphate (MEP). This is 2-C-methyl-D-erythritol 4-phosphate cytidylyltransferase from Pseudomonas savastanoi pv. phaseolicola (strain 1448A / Race 6) (Pseudomonas syringae pv. phaseolicola (strain 1448A / Race 6)).